Consider the following 347-residue polypeptide: Quinolinate synthase (347 aa).

The iminosuccinate site is built by His-47 and Ser-68. Cys-113 contributes to the [4Fe-4S] cluster binding site. Residues 139-141 (YAN) and Ser-156 each bind iminosuccinate. Position 200 (Cys-200) interacts with [4Fe-4S] cluster. Residues 226-228 (HPE) and Thr-243 each bind iminosuccinate. Cys-297 is a [4Fe-4S] cluster binding site.

This sequence belongs to the quinolinate synthase family. Type 1 subfamily. [4Fe-4S] cluster is required as a cofactor.

It localises to the cytoplasm. The enzyme catalyses iminosuccinate + dihydroxyacetone phosphate = quinolinate + phosphate + 2 H2O + H(+). It functions in the pathway cofactor biosynthesis; NAD(+) biosynthesis; quinolinate from iminoaspartate: step 1/1. Functionally, catalyzes the condensation of iminoaspartate with dihydroxyacetone phosphate to form quinolinate. The sequence is that of Quinolinate synthase from Shigella boydii serotype 18 (strain CDC 3083-94 / BS512).